The primary structure comprises 201 residues: Charged multivesicular body protein 6 (201 aa).

Gly2 carries N-myristoyl glycine lipidation. Positions 10-145 (QSRVTEQDKA…YQRQIDELLA (136 aa)) form a coiled coil. Ser119 carries the phosphoserine modification. Residue Thr130 is modified to Phosphothreonine. A Type-2 MIT-interacting motif motif is present at residues 168–179 (IELPEVPSEPLP). The interval 171–201 (PEVPSEPLPEKIPEDVPVKARPRQAELVAAS) is disordered. Residues 178-188 (LPEKIPEDVPV) show a composition bias toward basic and acidic residues.

This sequence belongs to the SNF7 family. In terms of assembly, probable core component of the endosomal sorting required for transport complex III (ESCRT-III). ESCRT-III components are thought to multimerize to form a flat lattice on the perimeter membrane of the endosome. Several assembly forms of ESCRT-III may exist that interact and act sequentially. Interacts with VPS4A; the interaction is direct. Interacts with VPS4B; the interaction is direct. Interacts with CHMP4A, CHMP4B and CHMP4C. Interacts with SNF8, VPS25 and VPS36. Post-translationally, ISGylated in a CHMP5-dependent manner. Isgylation weakens its interaction with VPS4A.

It is found in the endomembrane system. Its subcellular location is the endosome membrane. The protein localises to the late endosome membrane. The protein resides in the membrane. In terms of biological role, probable core component of the endosomal sorting required for transport complex III (ESCRT-III) which is involved in multivesicular bodies (MVBs) formation and sorting of endosomal cargo proteins into MVBs. MVBs contain intraluminal vesicles (ILVs) that are generated by invagination and scission from the limiting membrane of the endosome and mostly are delivered to lysosomes enabling degradation of membrane proteins, such as stimulated growth factor receptors, lysosomal enzymes and lipids. The MVB pathway appears to require the sequential function of ESCRT-O, -I,-II and -III complexes. ESCRT-III proteins mostly dissociate from the invaginating membrane before the ILV is released. The ESCRT machinery also functions in topologically equivalent membrane fission events, such as the terminal stages of cytokinesis and the budding of enveloped viruses (lentiviruses). ESCRT-III proteins are believed to mediate the necessary vesicle extrusion and/or membrane fission activities, possibly in conjunction with the AAA ATPase VPS4. In the ESCRT-III complex, it probably serves as an acceptor for the ESCRT-II complex on endosomal membrane. The sequence is that of Charged multivesicular body protein 6 (CHMP6) from Pongo abelii (Sumatran orangutan).